The primary structure comprises 213 residues: Proteasome subunit beta 1 (213 aa).

The propeptide at 1–18 (MVFIAVFNGVFAMSSLPG) is removed in mature form; by autocatalysis. The active-site Nucleophile is T19.

Belongs to the peptidase T1B family. In terms of assembly, the 20S proteasome core is composed of 14 alpha and 14 beta subunits that assemble into four stacked heptameric rings, resulting in a barrel-shaped structure. The two inner rings, each composed of seven catalytic beta subunits, are sandwiched by two outer rings, each composed of seven alpha subunits. The catalytic chamber with the active sites is on the inside of the barrel. Has a gated structure, the ends of the cylinder being occluded by the N-termini of the alpha-subunits. Is capped at one or both ends by the proteasome regulatory ATPase, PAN.

It localises to the cytoplasm. It carries out the reaction Cleavage of peptide bonds with very broad specificity.. Its activity is regulated as follows. The formation of the proteasomal ATPase PAN-20S proteasome complex, via the docking of the C-termini of PAN into the intersubunit pockets in the alpha-rings, triggers opening of the gate for substrate entry. Interconversion between the open-gate and close-gate conformations leads to a dynamic regulation of the 20S proteasome proteolysis activity. Functionally, component of the proteasome core, a large protease complex with broad specificity involved in protein degradation. The polypeptide is Proteasome subunit beta 1 (Staphylothermus marinus (strain ATCC 43588 / DSM 3639 / JCM 9404 / F1)).